A 50-amino-acid chain; its full sequence is Photosystem II reaction center protein M (50 aa).

A helical membrane pass occupies residues 7-27 (GFVASLLFVGIPTIFLIGLFI).

This sequence belongs to the PsbM family. PSII is composed of 1 copy each of membrane proteins PsbA, PsbB, PsbC, PsbD, PsbE, PsbF, PsbH, PsbI, PsbJ, PsbK, PsbL, PsbM, PsbT, PsbX, PsbY, Psb30/Ycf12, peripheral proteins PsbO, CyanoQ (PsbQ), PsbU, PsbV and a large number of cofactors. It forms dimeric complexes.

It localises to the cellular thylakoid membrane. Its function is as follows. One of the components of the core complex of photosystem II (PSII). PSII is a light-driven water:plastoquinone oxidoreductase that uses light energy to abstract electrons from H(2)O, generating O(2) and a proton gradient subsequently used for ATP formation. It consists of a core antenna complex that captures photons, and an electron transfer chain that converts photonic excitation into a charge separation. This subunit is found at the monomer-monomer interface. The chain is Photosystem II reaction center protein M from Prochlorococcus marinus subsp. pastoris (strain CCMP1986 / NIES-2087 / MED4).